The primary structure comprises 261 residues: Ribonuclease PH (261 aa).

Phosphate-binding positions include Arg87 and 125 to 127 (GTR).

Belongs to the RNase PH family. As to quaternary structure, homohexameric ring arranged as a trimer of dimers.

The enzyme catalyses tRNA(n+1) + phosphate = tRNA(n) + a ribonucleoside 5'-diphosphate. Phosphorolytic 3'-5' exoribonuclease that plays an important role in tRNA 3'-end maturation. Removes nucleotide residues following the 3'-CCA terminus of tRNAs; can also add nucleotides to the ends of RNA molecules by using nucleoside diphosphates as substrates, but this may not be physiologically important. Probably plays a role in initiation of 16S rRNA degradation (leading to ribosome degradation) during starvation. The sequence is that of Ribonuclease PH from Thermoanaerobacter pseudethanolicus (strain ATCC 33223 / 39E) (Clostridium thermohydrosulfuricum).